The chain runs to 268 residues: Phosphatidylglycerol--prolipoprotein diacylglyceryl transferase (268 aa).

Transmembrane regions (helical) follow at residues 27 to 47 (PALRWYGFTYLVGFVAAMWLL), 66 to 86 (LLFYGFLGVILGGRIGYVLFY), 104 to 124 (GGMSFHGGLMGVITAMIYIAW), 130 to 150 (FFAVADMVAPVVPIGLGAGRI), 181 to 201 (PSQLYQFALEGVALFLLLYWF), 208 to 228 (VGAVSGMFLLGYGIFRVIVET), and 242 to 262 (FMTMGQILSVPMILFGLYLIL). Position 149 (R149) interacts with a 1,2-diacyl-sn-glycero-3-phospho-(1'-sn-glycerol).

The protein belongs to the Lgt family.

It localises to the cell inner membrane. The catalysed reaction is L-cysteinyl-[prolipoprotein] + a 1,2-diacyl-sn-glycero-3-phospho-(1'-sn-glycerol) = an S-1,2-diacyl-sn-glyceryl-L-cysteinyl-[prolipoprotein] + sn-glycerol 1-phosphate + H(+). It participates in protein modification; lipoprotein biosynthesis (diacylglyceryl transfer). Functionally, catalyzes the transfer of the diacylglyceryl group from phosphatidylglycerol to the sulfhydryl group of the N-terminal cysteine of a prolipoprotein, the first step in the formation of mature lipoproteins. The chain is Phosphatidylglycerol--prolipoprotein diacylglyceryl transferase from Shewanella sp. (strain ANA-3).